The chain runs to 281 residues: DegV domain-containing protein DR_1986 (281 aa).

Residues 3–278 (IAIVTDSTSD…PGAVGVALEP (276 aa)) enclose the DegV domain. The hexadecanoate site is built by threonine 61 and serine 93.

May bind long-chain fatty acids, such as palmitate, and may play a role in lipid transport or fatty acid metabolism. The sequence is that of DegV domain-containing protein DR_1986 from Deinococcus radiodurans (strain ATCC 13939 / DSM 20539 / JCM 16871 / CCUG 27074 / LMG 4051 / NBRC 15346 / NCIMB 9279 / VKM B-1422 / R1).